The primary structure comprises 448 residues: Mitochondrial distribution and morphology protein 10 (448 aa).

Disordered stretches follow at residues 101–126 (QIHPPLAPESPNESRHAEPNERSEKA) and 366–386 (PPLPPSPVKGTSASAVTPAGE). The segment covering 112 to 126 (NESRHAEPNERSEKA) has biased composition (basic and acidic residues).

This sequence belongs to the MDM10 family. Component of the ER-mitochondria encounter structure (ERMES) or MDM complex, composed of MMM1, MDM10, MDM12 and MDM34. Associates with the mitochondrial outer membrane sorting assembly machinery SAM(core) complex.

The protein resides in the mitochondrion outer membrane. In terms of biological role, component of the ERMES/MDM complex, which serves as a molecular tether to connect the endoplasmic reticulum and mitochondria. Components of this complex are involved in the control of mitochondrial shape and protein biogenesis and may function in phospholipid exchange. MDM10 is involved in the late assembly steps of the general translocase of the mitochondrial outer membrane (TOM complex). Functions in the TOM40-specific route of the assembly of outer membrane beta-barrel proteins, including the association of TOM40 with the receptor TOM22 and small TOM proteins. Can associate with the SAM(core) complex as well as the MDM12-MMM1 complex, both involved in late steps of the major beta-barrel assembly pathway, that is responsible for biogenesis of all outer membrane beta-barrel proteins. May act as a switch that shuttles between both complexes and channels precursor proteins into the TOM40-specific pathway. Plays a role in mitochondrial morphology and in the inheritance of mitochondria. The protein is Mitochondrial distribution and morphology protein 10 of Coccidioides immitis (strain RS) (Valley fever fungus).